The following is a 346-amino-acid chain: Biotin synthase (346 aa).

Residues 38–256 (QQVQVSTLLS…IAVARIMMPT (219 aa)) form the Radical SAM core domain. [4Fe-4S] cluster contacts are provided by Cys53, Cys57, and Cys60. The [2Fe-2S] cluster site is built by Cys97, Cys128, Cys188, and Arg260.

The protein belongs to the radical SAM superfamily. Biotin synthase family. In terms of assembly, homodimer. It depends on [4Fe-4S] cluster as a cofactor. [2Fe-2S] cluster is required as a cofactor.

The enzyme catalyses (4R,5S)-dethiobiotin + (sulfur carrier)-SH + 2 reduced [2Fe-2S]-[ferredoxin] + 2 S-adenosyl-L-methionine = (sulfur carrier)-H + biotin + 2 5'-deoxyadenosine + 2 L-methionine + 2 oxidized [2Fe-2S]-[ferredoxin]. The protein operates within cofactor biosynthesis; biotin biosynthesis; biotin from 7,8-diaminononanoate: step 2/2. Its function is as follows. Catalyzes the conversion of dethiobiotin (DTB) to biotin by the insertion of a sulfur atom into dethiobiotin via a radical-based mechanism. This chain is Biotin synthase, found in Salmonella gallinarum (strain 287/91 / NCTC 13346).